The primary structure comprises 527 residues: Zinc finger imprinted 2 (527 aa).

Residues 1–16 (MYQPEDDNNSDVTSDD) show a composition bias toward acidic residues. The segment at 1–104 (MYQPEDDNNS…SRSQDAESYQ (104 aa)) is disordered. Basic and acidic residues-rich tracts occupy residues 17–26 (DMTRNRRESS), 35–56 (SGDR…DRWS), and 80–99 (FEMD…RSQD). The KRAB domain maps to 176 to 246 (VTFEDVLVDF…ETDSRHTVIC (71 aa)). Residues 247–322 (QGESHDDPLE…GICTSPQSAS (76 aa)) are disordered. Polar residues predominate over residues 259 to 275 (QGNQEKLLTPITMNDPK). The segment covering 297 to 307 (QSKDPLGKDPQ) has biased composition (basic and acidic residues). C2H2-type zinc fingers lie at residues 328–350 (NRCE…ERIH), 356–378 (YECK…QKTH), 412–434 (FECF…LKAH), 466–488 (CQCC…YRTH), and 494–516 (YQCQ…YQLH).

Belongs to the krueppel C2H2-type zinc-finger protein family. As to expression, highest levels of expression in adult testis; modest levels in fetal kidney and brain.

The protein localises to the nucleus. Its function is as follows. May be involved in transcriptional regulation. This is Zinc finger imprinted 2 (ZIM2) from Homo sapiens (Human).